Here is a 167-residue protein sequence, read N- to C-terminus: uncharacterized protein (167 aa).

The next 2 membrane-spanning stretches (helical) occupy residues 21–41 (KIGLAIFLIGAFINLIHIYKP) and 87–107 (MIITFILVQTTLITLDLYVFG). The span at 136–159 (RKQRLKEQREKKEQKKEQKKEKKT) shows a compositional bias: basic and acidic residues. The disordered stretch occupies residues 136-167 (RKQRLKEQREKKEQKKEQKKEKKTERRKKKKL).

The protein localises to the membrane. This is an uncharacterized protein from Schizosaccharomyces pombe (strain 972 / ATCC 24843) (Fission yeast).